The sequence spans 514 residues: Variant surface glycoprotein ILTAT 1.24 (514 aa).

The N-terminal stretch at Met1 to Ala23 is a signal peptide. 2 disulfide bridges follow: Cys37–Cys162 and Cys143–Cys204. Residue Asn443 is glycosylated (N-linked (GlcNAc...) asparagine). Residues Gly451–Asp476 are disordered. Low complexity predominate over residues Thr455–Thr464. The segment covering Thr465–Asp476 has biased composition (basic and acidic residues). Asp491 carries GPI-anchor amidated aspartate lipidation. A propeptide spans Ser492–Phe514 (removed in mature form).

Its subcellular location is the cell membrane. Its function is as follows. VSG forms a coat on the surface of the parasite. The trypanosome evades the immune response of the host by expressing a series of antigenically distinct VSGs from an estimated 1000 VSG genes. In Trypanosoma brucei brucei, this protein is Variant surface glycoprotein ILTAT 1.24.